Consider the following 257-residue polypeptide: Probable enoyl-CoA hydratase echA8 (257 aa).

This sequence belongs to the enoyl-CoA hydratase/isomerase family.

The enzyme catalyses a (3S)-3-hydroxyacyl-CoA = a (2E)-enoyl-CoA + H2O. It carries out the reaction a 4-saturated-(3S)-3-hydroxyacyl-CoA = a (3E)-enoyl-CoA + H2O. Its function is as follows. Could possibly oxidize fatty acids using specific components. The polypeptide is Probable enoyl-CoA hydratase echA8 (echA8) (Mycobacterium leprae (strain TN)).